Consider the following 264-residue polypeptide: Type II iodothyronine deiodinase (264 aa).

Topologically, residues 1–7 (MGLLSVD) are lumenal. Residues 8 to 28 (LLITLQILPGFFSNCLFLALY) traverse the membrane as a helical; Signal-anchor for type III membrane protein segment. Residues 29 to 264 (DSVVLVKHVL…AESGQTGTEK (236 aa)) lie on the Cytoplasmic side of the membrane. U124 is a catalytic residue. Residue U124 is a non-standard amino acid, selenocysteine.

The protein belongs to the iodothyronine deiodinase family. As to quaternary structure, predominantly monomer. Can form homodimers but homodimerization is not essential for enzyme activity. High levels seen in the metamorphosing tail.

It is found in the endoplasmic reticulum membrane. The catalysed reaction is 3,3',5-triiodo-L-thyronine + iodide + A + H(+) = L-thyroxine + AH2. The enzyme catalyses 3,3'-diiodo-L-thyronine + iodide + A + H(+) = 3,3',5'-triiodo-L-thyronine + AH2. It carries out the reaction 3'-iodo-L-thyronine + iodide + A + H(+) = 3',5'-diiodo-L-thyronine + AH2. It catalyses the reaction 3,3'-diiodothyronamine + iodide + A + H(+) = 3,3',5'-triiodothyronamine + AH2. The catalysed reaction is 3'-iodothyronamine + iodide + A + H(+) = 3',5'-diiodothyronamine + AH2. With respect to regulation, not inhibited by N(6)-propylthiouracil. In terms of biological role, plays a crucial role in the metabolism of thyroid hormones (TH) and has specific roles in TH activation and inactivation by deiodination. Catalyzes the deiodination of L-thyroxine (T4) to 3,5,3'-triiodothyronine (T3) and 3',5'-diiodothyronine (3',5'-T2) to 3'-monoiodothyronine (3'-T1) via outer-ring deiodination (ORD). Catalyzes the deiodination of 3,3',5'-triiodothyronine (rT3) to 3,3'-diiodothyronine (3,3'-T2) via ORD. Catalyzes the phenolic ring deiodinations of 3,3',5'-triiodothyronamine and 3',5'- diiodothyronamine. The sequence is that of Type II iodothyronine deiodinase (dio2) from Aquarana catesbeiana (American bullfrog).